We begin with the raw amino-acid sequence, 148 residues long: Putative cyclin-dependent kinase inhibitor SPL2 (148 aa).

A phosphoserine mark is found at Ser59 and Ser86.

It localises to the cytoplasmic granule. The protein resides in the cytoplasm. Functionally, putative cyclin-dependent kinase (CDK) inhibitor necessary and sufficient for PHO pathway-dependent down-regulation of low-affinity phosphate transport. In Saccharomyces cerevisiae (strain ATCC 204508 / S288c) (Baker's yeast), this protein is Putative cyclin-dependent kinase inhibitor SPL2 (SPL2).